We begin with the raw amino-acid sequence, 296 residues long: Cytidine deaminase (296 aa).

2 CMP/dCMP-type deaminase domains span residues 47–167 (ELNE…FGPS) and 186–296 (DSND…VEPE). 88–90 (NIE) lines the substrate pocket. His-101 provides a ligand contact to Zn(2+). Glu-103 acts as the Proton donor in catalysis. Residues Cys-128 and Cys-131 each coordinate Zn(2+).

Belongs to the cytidine and deoxycytidylate deaminase family. In terms of assembly, homodimer. Zn(2+) is required as a cofactor.

It carries out the reaction cytidine + H2O + H(+) = uridine + NH4(+). It catalyses the reaction 2'-deoxycytidine + H2O + H(+) = 2'-deoxyuridine + NH4(+). This enzyme scavenges exogenous and endogenous cytidine and 2'-deoxycytidine for UMP synthesis. This chain is Cytidine deaminase, found in Shewanella halifaxensis (strain HAW-EB4).